The sequence spans 648 residues: Threonine--tRNA ligase (648 aa).

The region spanning 1–61 (MIKITFPNTS…NENASVKLYK (61 aa)) is the TGS domain. Residues 243–542 (DHRRIGKEME…MIEHTGGKFP (300 aa)) are catalytic. Zn(2+) is bound by residues C338, H389, and H519.

This sequence belongs to the class-II aminoacyl-tRNA synthetase family. As to quaternary structure, homodimer. The cofactor is Zn(2+).

The protein localises to the cytoplasm. The enzyme catalyses tRNA(Thr) + L-threonine + ATP = L-threonyl-tRNA(Thr) + AMP + diphosphate + H(+). In terms of biological role, catalyzes the attachment of threonine to tRNA(Thr) in a two-step reaction: L-threonine is first activated by ATP to form Thr-AMP and then transferred to the acceptor end of tRNA(Thr). Also edits incorrectly charged L-seryl-tRNA(Thr). This is Threonine--tRNA ligase from Azobacteroides pseudotrichonymphae genomovar. CFP2.